The following is a 359-amino-acid chain: F-box protein At5g49610 (359 aa).

One can recognise an F-box domain in the interval 3 to 52 (NQKGALFPDEVILQILARLPVKSLFRFKSVCKSWYRLPSDKYFTSLFNQL).

In terms of assembly, part of a SCF (SKP1-cullin-F-box) protein ligase complex. Interacts with SKP1A, SKP1B, ASK11, ASK12, ASK13 and ASK14.

Its pathway is protein modification; protein ubiquitination. In Arabidopsis thaliana (Mouse-ear cress), this protein is F-box protein At5g49610.